Reading from the N-terminus, the 264-residue chain is Acid phosphatase (264 aa).

An N-terminal signal peptide occupies residues 1-28; the sequence is MIKVPRFICMIALTSGILASGLSQSVSA.

This sequence belongs to the class A bacterial acid phosphatase family. Mg(2+) is required as a cofactor. It depends on Zn(2+) as a cofactor.

The protein resides in the periplasm. The catalysed reaction is a phosphate monoester + H2O = an alcohol + phosphate. The sequence is that of Acid phosphatase (phoC) from Zymomonas mobilis subsp. mobilis (strain ATCC 31821 / ZM4 / CP4).